The sequence spans 209 residues: Cytidylate kinase (209 aa).

An ATP-binding site is contributed by 9–17 (GPAAAGKGT).

This sequence belongs to the cytidylate kinase family. Type 1 subfamily.

The protein localises to the cytoplasm. It catalyses the reaction CMP + ATP = CDP + ADP. The catalysed reaction is dCMP + ATP = dCDP + ADP. The protein is Cytidylate kinase of Granulibacter bethesdensis (strain ATCC BAA-1260 / CGDNIH1).